The following is a 422-amino-acid chain: Serine--tRNA ligase (422 aa).

229-231 (TAE) serves as a coordination point for L-serine. 260-262 (RKE) serves as a coordination point for ATP. Glu283 contributes to the L-serine binding site. An ATP-binding site is contributed by 347 to 350 (EISS). Position 383 (Ser383) interacts with L-serine.

It belongs to the class-II aminoacyl-tRNA synthetase family. Type-1 seryl-tRNA synthetase subfamily. As to quaternary structure, homodimer. The tRNA molecule binds across the dimer.

It is found in the cytoplasm. It catalyses the reaction tRNA(Ser) + L-serine + ATP = L-seryl-tRNA(Ser) + AMP + diphosphate + H(+). It carries out the reaction tRNA(Sec) + L-serine + ATP = L-seryl-tRNA(Sec) + AMP + diphosphate + H(+). It participates in aminoacyl-tRNA biosynthesis; selenocysteinyl-tRNA(Sec) biosynthesis; L-seryl-tRNA(Sec) from L-serine and tRNA(Sec): step 1/1. Catalyzes the attachment of serine to tRNA(Ser). Is also able to aminoacylate tRNA(Sec) with serine, to form the misacylated tRNA L-seryl-tRNA(Sec), which will be further converted into selenocysteinyl-tRNA(Sec). In Geobacter sp. (strain M21), this protein is Serine--tRNA ligase.